The sequence spans 176 residues: MTSPSPLVGIIMGSDSDLPTMAAAIAVCEEFAVPTEVAIISAHRTPERMVEYAQTAHQRGLRIIIAGAGGAAHLPGMVAALTPLPVIGVPVQTKTLQGVDSLYSIVQMPGGIPVATVAIGNAKNAGLLAVQILASHNPVLLEKVQQYRQSLETMVLDKQAELERLGYRAYLDQQNQ.

Substrate is bound by residues serine 14, aspartate 17, and arginine 44.

It belongs to the AIR carboxylase family. Class I subfamily.

The enzyme catalyses 5-carboxyamino-1-(5-phospho-D-ribosyl)imidazole + H(+) = 5-amino-1-(5-phospho-D-ribosyl)imidazole-4-carboxylate. It participates in purine metabolism; IMP biosynthesis via de novo pathway; 5-amino-1-(5-phospho-D-ribosyl)imidazole-4-carboxylate from 5-amino-1-(5-phospho-D-ribosyl)imidazole (N5-CAIR route): step 2/2. Catalyzes the conversion of N5-carboxyaminoimidazole ribonucleotide (N5-CAIR) to 4-carboxy-5-aminoimidazole ribonucleotide (CAIR). The sequence is that of N5-carboxyaminoimidazole ribonucleotide mutase from Synechocystis sp. (strain ATCC 27184 / PCC 6803 / Kazusa).